The sequence spans 423 residues: Protein phosphatase 2C 77 (423 aa).

Positions 74-95 (GDEINGSDEFDPRSMNQSEKKV) are disordered. The PPM-type phosphatase domain maps to 112 to 411 (LYGVTSICGR…DNISVVVVDL (300 aa)). Mg(2+) contacts are provided by Asp165, Asp251, and Ser252. A disulfide bridge connects residues Cys257 and Cys331. 2 residues coordinate Mg(2+): Asp337 and Asp402.

This sequence belongs to the PP2C family. As to quaternary structure, interacts with SPK1, CIPK15/PKS3, GPX3, SCAR1, SCAR2, SCAR3 and SCARL. Also interacts with CIPK24/SOS2. Binds to the fibrillin precursor protein. Interacts with ABA-bounded PYR1, PYL1, PYL2, PYL3, PYL4, PYL5, PYL6, PYL8 and PYL9, and with free PYL2, PYL3 and PYL4. Interacts with and represses GHR1, and, to a lesser extent, SRK2E/OST1. Mg(2+) serves as cofactor. Requires Mn(2+) as cofactor.

The catalysed reaction is O-phospho-L-seryl-[protein] + H2O = L-seryl-[protein] + phosphate. It catalyses the reaction O-phospho-L-threonyl-[protein] + H2O = L-threonyl-[protein] + phosphate. Phosphatase activity repressed by oxidized ATGPX3, free fatty acids (e.g. arachidonic acid (20:4) and Linolenic acid (18:3)) and by H(2)O(2). Repressed by PYR/PYL/RCAR ABA receptors in an ABA-dependent manner. Repressor of the abscisic acid (ABA) signaling pathway that regulates numerous ABA responses, such as stomatal closure, osmotic water permeability of the plasma membrane (Pos), high light stress, response to glucose, seed germination and inhibition of vegetative growth. During the stomatal closure regulation, modulates the inward calcium-channel permeability as well as H(2)O(2) and oxidative burst in response to ABA and dehydration. Represses GHR1 and, to some extent, SRK2E/OST1, kinases involved in the regulation of SLAC1-dependent stomatal closure. Controls negatively fibrillin that is involved in mediating ABA-induced photoprotection. May be implicated in ABA content regulation. Involved in acquired thermotolerance of root growth and seedling survival. Required for the Erwinia amylovora harpin-induced (HrpN) drought tolerance. Involved in the hydrotropic response. In Arabidopsis thaliana (Mouse-ear cress), this protein is Protein phosphatase 2C 77.